A 587-amino-acid chain; its full sequence is Formate--tetrahydrofolate ligase (587 aa).

73 to 80 is an ATP binding site; that stretch reads TPLGEGKS.

It belongs to the formate--tetrahydrofolate ligase family.

The catalysed reaction is (6S)-5,6,7,8-tetrahydrofolate + formate + ATP = (6R)-10-formyltetrahydrofolate + ADP + phosphate. It participates in one-carbon metabolism; tetrahydrofolate interconversion. This is Formate--tetrahydrofolate ligase from Desulfosudis oleivorans (strain DSM 6200 / JCM 39069 / Hxd3) (Desulfococcus oleovorans).